Reading from the N-terminus, the 419-residue chain is Synaptotagmin-1 (419 aa).

Residues 1–57 (MVSESHHEALAAPPVTTVATVLPSNATEPASPGEGKEDAFSKLKEKFMNELHKIPLP) lie on the Vesicular side of the membrane. N-linked (GlcNAc...) asparagine glycosylation occurs at asparagine 25. A helical transmembrane segment spans residues 58–80 (PWALIAIAIVAVLLVLTCCFCIC). S-palmitoyl cysteine attachment occurs at residues cysteine 75, cysteine 76, cysteine 78, cysteine 80, and cysteine 83. Over 81-419 (KKCLFKKKNK…EVDAMLAVKK (339 aa)) the chain is Cytoplasmic. Residues 108–139 (KDLGKTMKDQDDDAETGLTDGEEKEEPKEEEK) are disordered. Positions 117–131 (QDDDAETGLTDGEEK) are enriched in acidic residues. Threonine 126 bears the Phosphothreonine mark. The tract at residues 133-379 (EPKEEEKLGK…AIGKVFVGYN (247 aa)) is phospholipid binding. The region spanning 139–258 (KLGKLQYSLD…DFGHVTEEWR (120 aa)) is the C2 1 domain. Ca(2+) is bound by residues leucine 169, aspartate 170, and aspartate 176. Tyrosine 227 carries the phosphotyrosine modification. Ca(2+) is bound by residues aspartate 228, phenylalanine 229, aspartate 230, serine 233, lysine 234, and aspartate 236. Serine 262 is subject to Phosphoserine. Residues 270 to 403 (KLGDICFSLR…NPRRPIAQWH (134 aa)) form the C2 2 domain. The Ca(2+) site is built by aspartate 301 and aspartate 307. A phosphoserine mark is found at serine 340 and serine 342. Ca(2+) contacts are provided by aspartate 361, aspartate 363, and aspartate 369.

It belongs to the synaptotagmin family. Homotetramer. Heterodimer; heterodimerizes with SYT2 in presence of calcium. Interacts with SCAMP5. Interacts with STON2. Forms a complex with SV2B, syntaxin 1 and SNAP25. Interacts with SV2A, SV2B and SV2C. Interacts with RIMS1. Interacts with PRRT2. Interacts with DNAJC5 in a phosphorylation-dependent manner. Interacts (via N-terminus) with RAB3A. Interacts with SYT12. Interacts with calmodulin. Interacts with DNM1 (via C-terminal proline-rich domain (PRD)); this interaction facilitates vesicle fission during clathrin-mediated endocytosis (CME). The cofactor is Ca(2+). Glycosylated.

It is found in the cytoplasmic vesicle. It localises to the secretory vesicle membrane. Its subcellular location is the secretory vesicle. The protein resides in the synaptic vesicle membrane. The protein localises to the chromaffin granule membrane. It is found in the cytoplasm. Calcium sensor that participates in triggering neurotransmitter release at the synapse. May have a regulatory role in the membrane interactions during trafficking of synaptic vesicles at the active zone of the synapse. It binds acidic phospholipids with a specificity that requires the presence of both an acidic head group and a diacyl backbone. A Ca(2+)-dependent interaction between synaptotagmin and putative receptors for activated protein kinase C has also been reported. It can bind to at least three additional proteins in a Ca(2+)-independent manner; these are neurexins, syntaxin and AP2. Plays a role in dendrite formation by melanocytes. The protein is Synaptotagmin-1 of Macaca fascicularis (Crab-eating macaque).